Consider the following 281-residue polypeptide: uncharacterized protein (281 aa).

A coiled-coil region spans residues 242-281 (IDKQSRKKNIIREINDIKSKINDLSNYMDNLISELDDLFD).

This is an uncharacterized protein from Acanthamoeba polyphaga (Amoeba).